The sequence spans 184 residues: Uroplakin-2 (184 aa).

The N-terminal stretch at 1-25 (MASTLPVQTLPLILILLAVLAPGTA) is a signal peptide. The propeptide occupies 26 to 84 (DFNISSLSGLLSPALTESLLIALPPCHLTGGNATLMVRRANDSKVVKSDFVVPPCRGRR). N28, N57, and N66 each carry an N-linked (GlcNAc...) asparagine glycan. Topologically, residues 85–155 (ELVSVVDSGS…IGLGMARTGG (71 aa)) are lumenal. Residues 156–180 (MVVITVLLSVAMFLLVVGLIVALHW) traverse the membrane as a helical segment. Residues 181–184 (DARK) are Cytoplasmic-facing.

This sequence belongs to the uroplakin-2 family. Interacts with uroplakin-1a (UPK1A).

It is found in the cell membrane. Component of the asymmetric unit membrane (AUM); a highly specialized biomembrane elaborated by terminally differentiated urothelial cells. May play an important role in regulating the assembly of the AUM. This chain is Uroplakin-2 (Upk2), found in Mus musculus (Mouse).